The primary structure comprises 440 residues: Beta-1,3-galactosyl-O-glycosyl-glycoprotein beta-1,6-N-acetylglucosaminyltransferase (440 aa).

The Cytoplasmic portion of the chain corresponds to 1–9 (MKMAGWKKK). The chain crosses the membrane as a helical; Signal-anchor for type II membrane protein span at residues 10–30 (LCPGHHLWALGCYMLLAVVSL). The Lumenal portion of the chain corresponds to 31–440 (RLSLRFKCDV…RHKAIYGTEL (410 aa)). 2 N-linked (GlcNAc...) asparagine; by host glycosylation sites follow: Asn72 and Asn108. Disulfide bonds link Cys73–Cys230, Cys164–Cys384, Cys185–Cys212, and Cys393–Cys425.

This sequence belongs to the glycosyltransferase 14 family.

The protein resides in the host Golgi apparatus membrane. The catalysed reaction is a 3-O-[beta-D-galactosyl-(1-&gt;3)-N-acetyl-alpha-D-galactosaminyl]-L-seryl-[protein] + UDP-N-acetyl-alpha-D-glucosamine = 3-O-{beta-D-galactosyl-(1-&gt;3)-[N-acetyl-beta-D-glucosaminyl-(1-&gt;6)]-N-acetyl-alpha-D-galactosaminyl}-L-seryl-[protein] + UDP + H(+). It catalyses the reaction a 3-O-[beta-D-galactosyl-(1-&gt;3)-N-acetyl-alpha-D-galactosaminyl]-L-threonyl-[protein] + UDP-N-acetyl-alpha-D-glucosamine = a 3-O-{beta-D-galactosyl-(1-&gt;3)-[N-acetyl-beta-D-glucosaminyl-(1-&gt;6)]-N-acetyl-alpha-D-galactosaminyl}-L-threonyl-[protein] + UDP + H(+). It carries out the reaction a beta-D-Gal-(1-&gt;4)-beta-D-GlcNAc-(1-&gt;3)-beta-D-Gal-(1-&gt;4)-beta-D-GlcNAc derivative + UDP-N-acetyl-alpha-D-glucosamine = a beta-D-Gal-(1-&gt;4)-beta-D-GlcNAc-(1-&gt;3)-[beta-D-GlcNAc-(1-&gt;6)]-beta-D-Gal-(1-&gt;4)-N-acetyl-beta-D-glucosaminyl derivative + UDP + H(+). The enzyme catalyses 3-O-[N-acetyl-beta-D-glucosaminyl-(1-&gt;3)-N-acetyl-alpha-D-galactosaminyl]-L-seryl-[protein] + UDP-N-acetyl-alpha-D-glucosamine = 3-O-[N-acetyl-beta-D-glucosaminyl-(1-&gt;3)-[N-acetyl-beta-D-glucosaminyl-(1-&gt;6)]-N-acetyl-alpha-D-galactosaminyl]-L-seryl-[protein] + UDP + H(+). The catalysed reaction is a 3-O-[N-acetyl-beta-D-glucosaminyl-(1-&gt;3)-N-acetyl-alpha-D-galactosaminyl]-L-threonyl-[protein] + UDP-N-acetyl-alpha-D-glucosamine = 3-O-[N-acetyl-beta-D-glucosaminyl-(1-&gt;3)-[N-acetyl-beta-D-glucosaminyl-(1-&gt;6)]-N-acetyl-alpha-D-galactosaminyl]-L-threonyl-[protein] + UDP + H(+). The protein operates within protein modification; protein glycosylation. In terms of biological role, non-essential glycosyltransferase that can synthesize all known mucin beta 6 N-acetylglucosaminides. Mediates core 2 and core 4 O-glycan branching, 2 important steps in mucin-type biosynthesis. Has also I-branching enzyme activity by converting linear into branched poly-N-acetyllactosaminoglycans. Contributes to the post-translational modifications of structural proteins. The protein is Beta-1,3-galactosyl-O-glycosyl-glycoprotein beta-1,6-N-acetylglucosaminyltransferase (Bo17) of Bovine herpesvirus 4 (strain V. test) (BoHV-4).